Consider the following 117-residue polypeptide: V-type sodium ATPase subunit F (117 aa).

Residues 1 to 20 (MARILTRIKEAEENNQKKEE) are disordered. Residues 7–20 (RIKEAEENNQKKEE) show a composition bias toward basic and acidic residues.

It belongs to the V-ATPase G subunit family.

In terms of biological role, involved in ATP-driven sodium extrusion. The sequence is that of V-type sodium ATPase subunit F (ntpF) from Enterococcus hirae (strain ATCC 9790 / DSM 20160 / JCM 8729 / LMG 6399 / NBRC 3181 / NCIMB 6459 / NCDO 1258 / NCTC 12367 / WDCM 00089 / R).